The sequence spans 223 residues: MKSAVILLPGLNRDRDMIAALTKITGQAPVTVWQTDTSIPDDVDLILIPGGFSYGDYLRCGAIAARMPVMQAVREKADKGVMVMGVCNGFQILLEAGLLPGALMRNASLKFVCREVKLEVTNANTSFTRGYKPGQIIRCPVAHHDGNYFADAETLKRLEGEGQVVFRYAEGTNPNGSVNDIAGIVNARGNVLGMMPHPENLIEAAHGGDDGRALFAGALGITA.

A Glutamine amidotransferase type-1 domain is found at 3-223 (SAVILLPGLN…LFAGALGITA (221 aa)). The active-site Nucleophile is C87. Active-site residues include H197 and E199.

As to quaternary structure, part of the FGAM synthase complex composed of 1 PurL, 1 PurQ and 2 PurS subunits.

The protein resides in the cytoplasm. It carries out the reaction N(2)-formyl-N(1)-(5-phospho-beta-D-ribosyl)glycinamide + L-glutamine + ATP + H2O = 2-formamido-N(1)-(5-O-phospho-beta-D-ribosyl)acetamidine + L-glutamate + ADP + phosphate + H(+). The catalysed reaction is L-glutamine + H2O = L-glutamate + NH4(+). It participates in purine metabolism; IMP biosynthesis via de novo pathway; 5-amino-1-(5-phospho-D-ribosyl)imidazole from N(2)-formyl-N(1)-(5-phospho-D-ribosyl)glycinamide: step 1/2. Its function is as follows. Part of the phosphoribosylformylglycinamidine synthase complex involved in the purines biosynthetic pathway. Catalyzes the ATP-dependent conversion of formylglycinamide ribonucleotide (FGAR) and glutamine to yield formylglycinamidine ribonucleotide (FGAM) and glutamate. The FGAM synthase complex is composed of three subunits. PurQ produces an ammonia molecule by converting glutamine to glutamate. PurL transfers the ammonia molecule to FGAR to form FGAM in an ATP-dependent manner. PurS interacts with PurQ and PurL and is thought to assist in the transfer of the ammonia molecule from PurQ to PurL. The polypeptide is Phosphoribosylformylglycinamidine synthase subunit PurQ (Brucella suis biovar 1 (strain 1330)).